Reading from the N-terminus, the 121-residue chain is Large ribosomal subunit protein bL12 (121 aa).

The protein belongs to the bacterial ribosomal protein bL12 family. As to quaternary structure, homodimer. Part of the ribosomal stalk of the 50S ribosomal subunit. Forms a multimeric L10(L12)X complex, where L10 forms an elongated spine to which 2 to 4 L12 dimers bind in a sequential fashion. Binds GTP-bound translation factors.

In terms of biological role, forms part of the ribosomal stalk which helps the ribosome interact with GTP-bound translation factors. Is thus essential for accurate translation. The sequence is that of Large ribosomal subunit protein bL12 from Pseudomonas fluorescens (strain ATCC BAA-477 / NRRL B-23932 / Pf-5).